The primary structure comprises 203 residues: Holliday junction branch migration complex subunit RuvA (203 aa).

The segment at methionine 1–asparagine 64 is domain I. Residues asparagine 65–proline 142 are domain II. A flexible linker region spans residues alanine 143–proline 154. The domain III stretch occupies residues alanine 155 to leucine 203.

Belongs to the RuvA family. In terms of assembly, homotetramer. Forms an RuvA(8)-RuvB(12)-Holliday junction (HJ) complex. HJ DNA is sandwiched between 2 RuvA tetramers; dsDNA enters through RuvA and exits via RuvB. An RuvB hexamer assembles on each DNA strand where it exits the tetramer. Each RuvB hexamer is contacted by two RuvA subunits (via domain III) on 2 adjacent RuvB subunits; this complex drives branch migration. In the full resolvosome a probable DNA-RuvA(4)-RuvB(12)-RuvC(2) complex forms which resolves the HJ.

Its subcellular location is the cytoplasm. In terms of biological role, the RuvA-RuvB-RuvC complex processes Holliday junction (HJ) DNA during genetic recombination and DNA repair, while the RuvA-RuvB complex plays an important role in the rescue of blocked DNA replication forks via replication fork reversal (RFR). RuvA specifically binds to HJ cruciform DNA, conferring on it an open structure. The RuvB hexamer acts as an ATP-dependent pump, pulling dsDNA into and through the RuvAB complex. HJ branch migration allows RuvC to scan DNA until it finds its consensus sequence, where it cleaves and resolves the cruciform DNA. This chain is Holliday junction branch migration complex subunit RuvA, found in Escherichia fergusonii (strain ATCC 35469 / DSM 13698 / CCUG 18766 / IAM 14443 / JCM 21226 / LMG 7866 / NBRC 102419 / NCTC 12128 / CDC 0568-73).